A 1315-amino-acid polypeptide reads, in one-letter code: MDINDPSFSSTENGIYELLSRGYAAIEAATERDLKLPELGDIIGQVHAPEYISQVLSGWKPFYLRSVVNIPDRIFEQYNRTECFTQMGLFAEIQRAWITVDNRLFLWDYLSGQNFQAYEDLSHTIVNVKLVRPKANVFVSEIQHLLVIATSQEMLLLGVTIDEKTGELSFFSTGIQISVQGINVNCIVSSEDGRIFFSGNKDPNLYEFSYQLEEGWFSRRCSKINITGSVFDNFIPSFFSFGTHGDGIKQIAVDDSRSLLYVLRETSSVSCYELTKNGVNRCVFYSFSSMISQAQMLNATSPLLDPRTTQIVSIVPIPAYESQQIYCVAITSTGCRFYMRGGRGPISHYAPSNSTLSSTPPSTLQLTFVRFPPPMQVENYASSRNYPANPFFLQNQSTSQQQPERSSAVKTTPMKCSSLSNIYTSDLFFAISSSNTNEGDVVCCTAPEVGRIANAWQSGTQPSLIESSMYVPIKGFVQDIKCIQNSRERNELVSQFNTPPPTFAILTNTGVYVVVHRRPIDVLASAIRMGPSLSSGIDGQVQLFFESVGRAEGCATCLGIVSGCLDQGDFSHAAANFSGSTTKLAQADLLDIVKKYYIEFGGKAFIDQSRYNNQYDSSSLEFVRLSGCHDGLASSISRIIRNVWKNHVIIAKKMQNKRIHYAPAFNATEILKIQSGLLYLSTFLENNKSFIEGLNSPNTLIGSSNVADEIAVQAEHRALSALLLVLQQIVEGISFLLFLNDTGVSDFHEIVSSTSIDIQKSCSNMTFGEFFTSKRGREVTKELVNSLVNRHLQSGGNIDMVSQLLRKKCGSFCSADDVLIFKAVESLKKAKDTVDIEERQSLIELSYTLFKKAAHVFTPEDLRLAVEEYKSLNAYTTAVNLALHVASARDDRNQALSYLVDGMPENDPRREPFESRTKCYSYIFEILDSLESQMSNDSSAIKVDVYDTIQRSKDELFHYCFYDWYSFKGLTDRLIEIDSPYIQSYLERNSTKDMKIADLLWQYYAKREQYYQASIVLYDLATTHLAFSLEQRIEYLTRAKGFGSCHVPNSLRHKMNKVMLSVLEQLDVASIQDDVLIAIRGDMRIPTSKREELSKQLDGEIIPLSDLFNNYADPLGYGEICLSIFQCADYRGINEILNCWESIIKTTHENAIISPVGSSPVEAVSSTLKNLTLRFSQSENVFPIEQIIDITERYAFDQQGEAVATGWVIDTFLGAGVSHELIFIVLNQLYDRREKPWQGKDRLFFLIKEVTHLLKLWHEVSVRAGVAQTSKPSFDAPLVLEAIEKYKNALGAPDTATKSCKENLISLDSEIRQTY.

It belongs to the non-repetitive/WGA-negative nucleoporin family.

The protein localises to the cytoplasm. It localises to the nucleus. This Schizosaccharomyces pombe (strain 972 / ATCC 24843) (Fission yeast) protein is Probable nucleoporin C890.06.